The chain runs to 394 residues: MVAGTRCLLVLLLPQVLLGGAAGLIPELGRKKFAAASSRPLSRPSEDVLSEFELRLLSMFGLKQRPTPSKDVVVPPYMLDLYRRHSGQPGAPAPDHRLERAASRANTVRSFHHEEAVEELPEMSGKTARRFFFNLSSVPSDEFLTSAELQIFREQIQEALGNSSFQHRINIYEIIKPAAANLKFPVTRLLDTRLVNQNTSQWESFDVTPAVMRWTTQGHTNHGFVVEVAHLEENPGVSKRHVRISRSLHQDEHSWSQIRPLLVTFGHDGKGHPLHKREKRQAKHKQRKRLKSSCKRHPLYVDFSDVGWNDWIVAPPGYHAFYCHGECPFPLADHLNSTNHAIVQTLVNSVNSKIPKACCVPTELSAISMLYLDENEKVVLKNYQDMVVEGCGCR.

The signal sequence occupies residues Met-1–Gly-19. The propeptide at Gly-20–Arg-280 is cleaved by PCSK5. Ser-86 is subject to Phosphoserine. N-linked (GlcNAc...) asparagine glycosylation is found at Asn-134, Asn-162, and Asn-198. The segment at Gly-269 to Lys-291 is disordered. The span at His-272–Lys-291 shows a compositional bias: basic residues. Disulfide bonds link Cys-294–Cys-359, Cys-323–Cys-391, and Cys-327–Cys-393. N-linked (GlcNAc...) asparagine glycosylation is present at Asn-336.

This sequence belongs to the TGF-beta family. Homodimer; disulfide-linked. Interacts with SOSTDC1. Interacts with GREM2, RGMA, RGMB and RGMC. Interacts with ASPN. Interacts with MAFP5. Interacts with FBN1 (via N-terminal domain) and FBN2. Interacts with type I receptor BMPR1A. Interacts with type II receptor BMPR2. Interacts with SCUBE3. Interacts with TNFAIP6 (primarily via Link domain); this interaction is inhibited by hyaluronan. Interacts with ERFE. Interacts with BMPR1A/ALK3; the interaction may induce HAMP expression. Forms heterodimers with BMP6 in vitro; the heterodimer then binds to its receptor BMPR1A /ALK3 and may induce HAMP expression. Interacts with TGFBR3.

The protein localises to the secreted. Its function is as follows. Growth factor of the TGF-beta superfamily that plays essential roles in many developmental processes, including cardiogenesis, neurogenesis, and osteogenesis. Induces cartilage and bone formation. Initiates the canonical BMP signaling cascade by associating with type I receptor BMPR1A and type II receptor BMPR2. Once all three components are bound together in a complex at the cell surface, BMPR2 phosphorylates and activates BMPR1A. In turn, BMPR1A propagates signal by phosphorylating SMAD1/5/8 that travel to the nucleus and act as activators and repressors of transcription of target genes. Also acts to promote expression of HAMP, via the interaction with its receptor BMPR1A/ALK3. Can also signal through non-canonical pathways such as ERK/MAP kinase signaling cascade that regulates osteoblast differentiation. Also stimulates the differentiation of myoblasts into osteoblasts via the EIF2AK3-EIF2A-ATF4 pathway by stimulating EIF2A phosphorylation which leads to increased expression of ATF4 which plays a central role in osteoblast differentiation. Acts as a positive regulator of odontoblast differentiation during mesenchymal tooth germ formation, expression is repressed during the bell stage by MSX1-mediated inhibition of CTNNB1 signaling. The protein is Bone morphogenetic protein 2 (Bmp2) of Mus musculus (Mouse).